We begin with the raw amino-acid sequence, 382 residues long: MANQGQRVSWGDESTKIRGRSNSRGRKSNNIPLSFFNPITLQQGSKFWNLCPRDFVPKGIGNRDQQIGYWNRQTRYRMVKGQRKELPERWFFYYLGTGPHADAKFKDKLDGVVWVAKDGAMNKPTTLGSRGANNESKALKFDGKVPGEFQLEVNQSRDNSRSRSQSRSRSRNRSQSRGRQQSNNKKDDSVEQAVLAALKKLGVDTEKQQQRSCSKSKERSNSKTRDTTPKNENKHTWKRTAGKGDVTRFYGARSSSANFGDSDLVANGSSAKHYPQLAECVPSVSSILFGSYWTSKEDGDQIEVTFTHKYHLPKDDPKTEQFLQQINAYARPSEVAKEQRKRKSRSKSAERSEQEVVPDALIENYTDVFDDTQVEMIDEVTN.

Disordered stretches follow at residues 1-29 (MANQ…RKSN) and 150-240 (QLEV…WKRT). The residue at position 9 (serine 9) is a Phosphoserine; by host. Positions 17 to 27 (IRGRSNSRGRK) are enriched in basic residues. Residues 31–153 (IPLSFFNPIT…KVPGEFQLEV (123 aa)) enclose the CoV N NTD domain. Residues 33 to 159 (LSFFNPITLQ…QLEVNQSRDN (127 aa)) are RNA-binding. Residues 154–163 (NQSRDNSRSR) show a composition bias toward low complexity. At serine 156 the chain carries Phosphoserine; by host. Positions 164–176 (SQSRSRSRNRSQS) are enriched in basic residues. Basic and acidic residues predominate over residues 201–235 (LGVDTEKQQQRSCSKSKERSNSKTRDTTPKNENKH). In terms of domain architecture, CoV N CTD spans 224 to 337 (TRDTTPKNEN…AYARPSEVAK (114 aa)). The tract at residues 231–334 (NENKHTWKRT…QINAYARPSE (104 aa)) is dimerization. A phosphoserine; by host mark is found at serine 254 and serine 256. Residues 329–358 (YARPSEVAKEQRKRKSRSKSAERSEQEVVP) are disordered.

This sequence belongs to the alphacoronavirus nucleocapsid protein family. As to quaternary structure, homooligomer. Both monomeric and oligomeric forms interact with RNA. Interacts with protein M. Interacts with NSP3; this interaction serves to tether the genome to the newly translated replicase-transcriptase complex at a very early stage of infection. ADP-ribosylated. The ADP-ribosylation is retained in the virion during infection. Post-translationally, phosphorylated on serine and threonine residues.

The protein resides in the virion. It is found in the host endoplasmic reticulum-Golgi intermediate compartment. The protein localises to the host Golgi apparatus. It localises to the host nucleus. Its subcellular location is the host nucleolus. Functionally, packages the positive strand viral genome RNA into a helical ribonucleocapsid (RNP) and plays a fundamental role during virion assembly through its interactions with the viral genome and membrane protein M. Plays an important role in enhancing the efficiency of subgenomic viral RNA transcription as well as viral replication. The protein is Nucleoprotein of Sus scrofa (Pig).